The chain runs to 236 residues: Heme oxygenase (236 aa).

Position 17 (His17) interacts with heme b.

The protein belongs to the heme oxygenase family.

Its subcellular location is the plastid. It is found in the chloroplast. It carries out the reaction heme b + 3 reduced [NADPH--hemoprotein reductase] + 3 O2 = biliverdin IXalpha + CO + Fe(2+) + 3 oxidized [NADPH--hemoprotein reductase] + 3 H2O + H(+). Functionally, catalyzes the opening of the heme ring with the release of iron. Key enzyme in the synthesis of the chromophoric part of the photosynthetic antennae. In Porphyra purpurea (Red seaweed), this protein is Heme oxygenase (pbsA).